Consider the following 298-residue polypeptide: Myozenin-1 (298 aa).

Residues 1 to 34 (MPLSGTPAPNKKRKSSKLIMELTGGGQESSGLNL) form a disordered region. Position 82 is a phosphoserine (Ser82). The tract at residues 105-173 (FSYSKGSSGG…TGTGDQAGGE (69 aa)) is disordered. Residues 118–129 (GSSSAGQYGSGQ) are compositionally biased toward low complexity. Positions 136–172 (SGSGSGGAGGPGSQTGRGGDAGTTGVGETGTGDQAGG) are enriched in gly residues.

Belongs to the myozenin family. In terms of assembly, interacts with ACTN2, ACTN3, FLNA, FLNB, FLNC, LDB3, PPP3CA and TCAP. Interacts via its C-terminal region with MYOT.

It localises to the nucleus. The protein resides in the cell projection. The protein localises to the pseudopodium. Its function is as follows. Myozenins may serve as intracellular binding proteins involved in linking Z-disk proteins such as alpha-actinin, gamma-filamin, TCAP/telethonin, LDB3/ZASP and localizing calcineurin signaling to the sarcomere. Plays an important role in the modulation of calcineurin signaling. May play a role in myofibrillogenesis. The polypeptide is Myozenin-1 (MYOZ1) (Sus scrofa (Pig)).